We begin with the raw amino-acid sequence, 288 residues long: ATP synthase gamma chain (288 aa).

Belongs to the ATPase gamma chain family. As to quaternary structure, F-type ATPases have 2 components, CF(1) - the catalytic core - and CF(0) - the membrane proton channel. CF(1) has five subunits: alpha(3), beta(3), gamma(1), delta(1), epsilon(1). CF(0) has three main subunits: a, b and c.

It localises to the cell inner membrane. In terms of biological role, produces ATP from ADP in the presence of a proton gradient across the membrane. The gamma chain is believed to be important in regulating ATPase activity and the flow of protons through the CF(0) complex. This Polaromonas naphthalenivorans (strain CJ2) protein is ATP synthase gamma chain.